The following is a 1067-amino-acid chain: MIKEPEFREYDPKKLEEKVEKFWSENEIYRKVKELRKDGPKYYFLDGPPYVSGAIHLGTAWNKIIKDMIIRFRTMQGYNVWRQPGYDMHGLPIEVKVEQALGLKTKKEIEEKIGVENFIKKCKEFALNNLKIMTEQFKMLGIWMDWDNPYMTIKNEYIESAWFTLKRAWEKGLLEKDKRVLHWCPRCETALAEHEVRGEYKLRKDPSIYVKFPVEGKENEYLLIWTTTPWTLPANLAVSAHPDYDYVKVKVEFNGREEYWILAKALVDKVLGEIGVKGEVVEEFKGRELEGLRYVHILMDEYPRQKEFKEKYEWAHRVILADFVTLEEGTGLVHTAPGHGEEDFEVGQKYGLPVYSPLDDQGKYTEGKWKGIYVKEADPKIIEHLREKGYLVKAGEIEHKYPHCWRCKTPLIFRATDQWFLKISKVKDKIIKENDEKVTWYPDWVKIRFDNGVRDSGDWVISRQRYWGIPLPIWQSEDGEIYVVGSWRELVELAVAIEVNGERIELPESYEEKLKVIEEKLGPEDLHRPYVDAFIIKVNGKDMRRVKDVVDVWFDSGIASWASLGYPRNKELFEKLWPADFIVEGEDQVTKWFYSQQAASIVAFDTVPYRRVAMHGYVLDEKGDKMSKSLGNIIRPEEVVERAGRDTFRFYMLWATNPWENLKFSWKGVEQVRRMLNILWNVYVLASTYMSLDNFDPRKLNPDELPFREEDKWILSRVNSLISEVENGIESFYLTKATRALYNFVVEDLSRWYVRLIRKRLWVEGEDPDKLAAYYTLWKVFDVLLRLLAPFTPYIAEEIYQNLIRPFTNVESVHMLDWPKVDEKAIDEELEREMEFIRRIVEAGSAARQRAKIKLRYPVRRIIIETEDETVKKAVERLNRILRDQLNAKEVKVGRVERELTIKPNFAKLGPEFKGDAKIIAKWINENGRELYEKGELTVEIDGKTFHLTREHIIVEEKLPDFFVSEEFEGGRVFVDKTLTRELIAEGLAREFVRRIQEMRKRLDLDVNDRIIVTIETTDENVELLKENLDYIMRETRADKIVFGKAKGYVVEWPEVQAKIGIEKVEE.

The short motif at 49-59 is the 'HIGH' region element; it reads PYVSGAIHLGT. The short motif at 625-629 is the 'KMSKS' region element; it reads KMSKS. Lys628 provides a ligand contact to ATP.

It belongs to the class-I aminoacyl-tRNA synthetase family. IleS type 2 subfamily. Monomer. Zn(2+) is required as a cofactor.

It localises to the cytoplasm. The enzyme catalyses tRNA(Ile) + L-isoleucine + ATP = L-isoleucyl-tRNA(Ile) + AMP + diphosphate. In terms of biological role, catalyzes the attachment of isoleucine to tRNA(Ile). As IleRS can inadvertently accommodate and process structurally similar amino acids such as valine, to avoid such errors it has two additional distinct tRNA(Ile)-dependent editing activities. One activity is designated as 'pretransfer' editing and involves the hydrolysis of activated Val-AMP. The other activity is designated 'posttransfer' editing and involves deacylation of mischarged Val-tRNA(Ile). The chain is Isoleucine--tRNA ligase from Pyrococcus abyssi (strain GE5 / Orsay).